The chain runs to 346 residues: MIDSKQKIAVLGAGSWGTALAALVARHDYPTILWGRDVRVIQSIDIQHQNFRYLPSIMLPQTLRATTDLAAAVSGADWVLVAVPSYAFTETLCRLAPLLSIGVGVAWATKGFEPGSGRFLHEVAREILGGDAPLAVVTGPSFAKEVTLGLPTAVTVHGEDACFTQMVANAMHGPMFRAYTGNDVIGAELGGAMKNVLAVAIGVADGMQLGMNARAGLITRGLNEMLRLSAVIGARPETLMGLAGLGDLVLTCTGDLSRNRRLGFALGRGQSLSDAIREIGQVVESVQTSDEVMRHAEQNGVELPISEAVRAVLREEITPYAGMKVLLAREQKPEYLDILFKANCSL.

NADPH-binding residues include S15, W16, R36, and K110. 3 residues coordinate sn-glycerol 3-phosphate: K110, G139, and S141. A143 contacts NADPH. K194, D247, S257, R258, and N259 together coordinate sn-glycerol 3-phosphate. Catalysis depends on K194, which acts as the Proton acceptor. Residue R258 participates in NADPH binding. NADPH is bound by residues V282 and E284.

Belongs to the NAD-dependent glycerol-3-phosphate dehydrogenase family.

Its subcellular location is the cytoplasm. It carries out the reaction sn-glycerol 3-phosphate + NAD(+) = dihydroxyacetone phosphate + NADH + H(+). The enzyme catalyses sn-glycerol 3-phosphate + NADP(+) = dihydroxyacetone phosphate + NADPH + H(+). Its pathway is membrane lipid metabolism; glycerophospholipid metabolism. Functionally, catalyzes the reduction of the glycolytic intermediate dihydroxyacetone phosphate (DHAP) to sn-glycerol 3-phosphate (G3P), the key precursor for phospholipid synthesis. In Xylella fastidiosa (strain Temecula1 / ATCC 700964), this protein is Glycerol-3-phosphate dehydrogenase [NAD(P)+].